A 232-amino-acid chain; its full sequence is tRNA1(Val) (adenine(37)-N6)-methyltransferase (232 aa).

Belongs to the methyltransferase superfamily. tRNA (adenine-N(6)-)-methyltransferase family.

It localises to the cytoplasm. The catalysed reaction is adenosine(37) in tRNA1(Val) + S-adenosyl-L-methionine = N(6)-methyladenosine(37) in tRNA1(Val) + S-adenosyl-L-homocysteine + H(+). Functionally, specifically methylates the adenine in position 37 of tRNA(1)(Val) (anticodon cmo5UAC). This is tRNA1(Val) (adenine(37)-N6)-methyltransferase from Haemophilus influenzae (strain ATCC 51907 / DSM 11121 / KW20 / Rd).